Here is an 837-residue protein sequence, read N- to C-terminus: Protein TRANSPARENT TESTA 9 (837 aa).

In terms of domain architecture, FPL spans 42-192 (LRSIAEILTY…AVRALTLNVY (151 aa)). The tract at residues 366-386 (TEEANQQCSSTAAGMSDDGNS) is disordered. Residues 368-378 (EANQQCSSTAA) show a composition bias toward polar residues.

It belongs to the CLEC16A/gop-1 family.

The protein resides in the golgi apparatus membrane. Involved in membrane trafficking and vacuole development through membrane fusion at the vacuole. Required for membrane trafficking machinery and accumulation of flavonoids in the seed coat. The protein is Protein TRANSPARENT TESTA 9 of Arabidopsis thaliana (Mouse-ear cress).